A 529-amino-acid chain; its full sequence is DNA-binding protein (529 aa).

Over residues 1-17 (MASREEEQRETTPERGR) the composition is skewed to basic and acidic residues. Disordered stretches follow at residues 1–108 (MASR…VDSE) and 125–168 (PVLI…SEST). A compositionally biased stretch (basic residues) spans 129 to 139 (KHGKGGKRTVR). A compositionally biased stretch (basic and acidic residues) spans 140-155 (RLNEDDPVARGMRTQE). Acidic residues predominate over residues 156–165 (EKEESSEAES). Tyr-195 carries the post-translational modification Phosphotyrosine; by host. Zn(2+) is bound by residues Cys-284 and His-286. The segment at 297–331 (IEMDVTSENGQRALKEQSSKAKIVKNRWGRNVVQI) is flexible loop. Zn(2+)-binding residues include Cys-339, Cys-355, Cys-396, Cys-398, Cys-450, and Cys-467. The interval 513-529 (VSLPVAHSDARQNPFDF) is C-terminal arm, DBP binding.

This sequence belongs to the adenoviridae E2A DNA-binding protein family. As to quaternary structure, homomultimerizes on viral ssDNA bound to pTP. Forms an initiation complex with viral polymerase, pTP and hosts NFIA and POU2F1/OCT1. Interacts with host SRCAP.

Its subcellular location is the host nucleus. Plays a role in the elongation phase of viral strand displacement replication by unwinding the template in an ATP-independent fashion, employing its capacity to form multimers. Also enhances the rate of initiation. Released from template upon second strand synthesis. Assembles in complex with viral pTP, viral pol, host NFIA and host POU2F1/OCT1 on viral origin of replication. Covers the whole ssDNA genome during synthesis. The complementary strand synthesis induces its release from DNA template. May inhibit cellular transcription mediated by the interaction between host SRCAP and CBP. This is DNA-binding protein from Human adenovirus C serotype 2 (HAdV-2).